The sequence spans 579 residues: MFS-type transporter sphD (579 aa).

The interval 17-62 is disordered; sequence SAFAVRAEPDSEPVSEKQGTAETDAETGAGGTEVPAERNGEDDVER. A compositionally biased stretch (basic and acidic residues) spans 51–62; sequence PAERNGEDDVER. 8 helical membrane passes run 73 to 93, 110 to 130, 138 to 158, 168 to 188, 200 to 220, 227 to 247, 267 to 287, and 294 to 314; these read AFIG…ALGI, FWAN…WASI, PPLY…AVAQ, VLQG…LADM, LMAI…ALFA, WIGW…FFFL, WIGM…LSWA, and GAWQ…IFAF. N335 is a glycosylation site (N-linked (GlcNAc...) asparagine). Transmembrane regions (helical) follow at residues 338 to 358, 367 to 391, 398 to 419, 429 to 449, 460 to 480, and 541 to 561; these read LVGG…LPLI, AILS…SMML, YVWI…LALF, LGLP…LLPM, GLAI…GLTI, and FQTI…TSLF.

It belongs to the major facilitator superfamily.

It is found in the membrane. Its function is as follows. MFS-type transporter; part of the gene cluster that mediates the biosynthesis of sphingofungins, bioactive molecules acting as sphingolipid inhibitors via inhibiting serine palmitoyl transferase (SPT). This Aspergillus fumigatus (strain CBS 144.89 / FGSC A1163 / CEA10) (Neosartorya fumigata) protein is MFS-type transporter sphD.